We begin with the raw amino-acid sequence, 490 residues long: UDP-glycosyltransferase 84A1 (490 aa).

Catalysis depends on His-30, which acts as the Proton acceptor. His-30 is a binding site for an anthocyanidin. The UDP-alpha-D-glucose site is built by Gln-358, His-373, Trp-376, Asn-377, Ser-378, and Glu-381. An an anthocyanidin-binding site is contributed by Gly-396. Residues Asp-397 and Gln-398 each contribute to the UDP-alpha-D-glucose site.

This sequence belongs to the UDP-glycosyltransferase family. As to expression, expressed in roots, flowers and siliques.

The catalysed reaction is (E)-4-coumarate + UDP-alpha-D-glucose = 4-O-(beta-D-glucosyl)-trans-4-coumarate + UDP + H(+). It catalyses the reaction (E)-ferulate + UDP-alpha-D-glucose = 1-O-[(E)-feruloyl]-beta-D-glucose + UDP. It carries out the reaction (E)-caffeate + UDP-alpha-D-glucose = 1-O-[(E)-caffeoyl]-beta-D-glucose + UDP. The enzyme catalyses (E)-sinapate + UDP-alpha-D-glucose = 1-O-(trans-sinapoyl)-beta-D-glucose + UDP. The catalysed reaction is (E)-cinnamate + UDP-alpha-D-glucose = 1-O-(trans-cinnamoyl)-beta-D-glucose + UDP. In terms of biological role, UDP-glucosyltransferase that forms glucose esters with phenylpropanoids. Glucosylates 4-coumarate, ferulate, caffeate, sinapate and cinnamate. Can glucosylate the phytotoxic xenobiotic compound 2,4,5-trichlorophenol (TCP). This chain is UDP-glycosyltransferase 84A1, found in Arabidopsis thaliana (Mouse-ear cress).